The following is a 219-amino-acid chain: Vesicle-associated membrane protein 721 (219 aa).

Over 1 to 196 the chain is Cytoplasmic; it reads MAQQSLIYSF…MWLQNMKIKL (196 aa). A Longin domain is found at 10–114; it reads FVARGTVILV…SLNKEFGSKL (105 aa). The 61-residue stretch at 130-190 folds into the v-SNARE coiled-coil homology domain; the sequence is KLAKVKAQVS…TQMRRKMWLQ (61 aa). The chain crosses the membrane as a helical; Anchor for type IV membrane protein span at residues 197 to 217; the sequence is IVLAIIIALILIIVLSVCHGF. The Vesicular segment spans residues 218-219; it reads KC.

This sequence belongs to the synaptobrevin family. As to expression, expressed in flowers, leaves, stems and roots.

The protein resides in the cell membrane. Its subcellular location is the early endosome membrane. Involved in the targeting and/or fusion of transport vesicles to their target membrane. In Arabidopsis thaliana (Mouse-ear cress), this protein is Vesicle-associated membrane protein 721.